We begin with the raw amino-acid sequence, 448 residues long: Probable glycine dehydrogenase (decarboxylating) subunit 1 (448 aa).

Belongs to the GcvP family. N-terminal subunit subfamily. As to quaternary structure, the glycine cleavage system is composed of four proteins: P, T, L and H. In this organism, the P 'protein' is a heterodimer of two subunits.

It carries out the reaction N(6)-[(R)-lipoyl]-L-lysyl-[glycine-cleavage complex H protein] + glycine + H(+) = N(6)-[(R)-S(8)-aminomethyldihydrolipoyl]-L-lysyl-[glycine-cleavage complex H protein] + CO2. Functionally, the glycine cleavage system catalyzes the degradation of glycine. The P protein binds the alpha-amino group of glycine through its pyridoxal phosphate cofactor; CO(2) is released and the remaining methylamine moiety is then transferred to the lipoamide cofactor of the H protein. The sequence is that of Probable glycine dehydrogenase (decarboxylating) subunit 1 from Staphylococcus aureus (strain COL).